The primary structure comprises 42 residues: Osteocalcin (42 aa).

The Gla domain maps to 1–40 (YLDHGLGAPAPYVDPLEPKREVDELADQMGFQEAYRRFYG). A 4-hydroxyproline modification is found at Pro-9. Residues Glu-17, Glu-21, and Asp-23 each coordinate Ca(2+). 4-carboxyglutamate is present on residues Glu-17 and Glu-21.

This sequence belongs to the osteocalcin/matrix Gla protein family. Gamma-carboxyglutamic acid residues are formed by vitamin K dependent carboxylation. These residues are essential for the binding of calcium.

It localises to the secreted. Its function is as follows. The carboxylated form is one of the main organic components of the bone matrix, which constitutes 1-2% of the total bone protein: it acts as a negative regulator of bone formation and is required to limit bone formation without impairing bone resorption or mineralization. The carboxylated form binds strongly to apatite and calcium. The uncarboxylated form acts as a hormone secreted by osteoblasts, which regulates different cellular processes, such as energy metabolism, male fertility and brain development. Regulates of energy metabolism by acting as a hormone favoring pancreatic beta-cell proliferation, insulin secretion and sensitivity and energy expenditure. Uncarboxylated osteocalcin hormone also promotes testosterone production in the testes: acts as a ligand for G protein-coupled receptor GPRC6A at the surface of Leydig cells, initiating a signaling response that promotes the expression of enzymes required for testosterone synthesis in a CREB-dependent manner. Also acts as a regulator of brain development: osteocalcin hormone crosses the blood-brain barrier and acts as a ligand for GPR158 on neurons, initiating a signaling response that prevents neuronal apoptosis in the hippocampus, favors the synthesis of all monoamine neurotransmitters and inhibits that of gamma-aminobutyric acid (GABA). Osteocalcin also crosses the placenta during pregnancy and maternal osteocalcin is required for fetal brain development. The polypeptide is Osteocalcin (Camelops hesternus (Western camel)).